The following is a 203-amino-acid chain: Ribosome-binding factor A (203 aa).

Over residues 119–141 the composition is skewed to basic and acidic residues; sequence LAEVRRDARPAGDEDPYRRPRTV. The tract at residues 119-203 is disordered; it reads LAEVRRDARP…SPGGDPTAGR (85 aa). Acidic residues predominate over residues 142-169; it reads DEDDEDEDEDLVDEFDEFDRVEELDADA.

The protein belongs to the RbfA family. As to quaternary structure, monomer. Binds 30S ribosomal subunits, but not 50S ribosomal subunits or 70S ribosomes.

Its subcellular location is the cytoplasm. Its function is as follows. One of several proteins that assist in the late maturation steps of the functional core of the 30S ribosomal subunit. Associates with free 30S ribosomal subunits (but not with 30S subunits that are part of 70S ribosomes or polysomes). Required for efficient processing of 16S rRNA. May interact with the 5'-terminal helix region of 16S rRNA. The chain is Ribosome-binding factor A from Frankia alni (strain DSM 45986 / CECT 9034 / ACN14a).